The sequence spans 154 residues: Urease accessory protein UreE (154 aa).

The tract at residues 135–154 (PENGAYHGTGGHHHHHHDHE) is disordered. Residues 144–154 (GGHHHHHHDHE) are compositionally biased toward basic residues.

Belongs to the UreE family.

The protein resides in the cytoplasm. In terms of biological role, involved in urease metallocenter assembly. Binds nickel. Probably functions as a nickel donor during metallocenter assembly. The polypeptide is Urease accessory protein UreE (Teredinibacter turnerae (strain ATCC 39867 / T7901)).